The chain runs to 702 residues: Methionine--tRNA ligase (702 aa).

A 'HIGH' region motif is present at residues 14 to 24; sequence PYANGPVHLGH. Zn(2+)-binding residues include Cys146, Cys149, Cys159, and Cys162. Positions 344–348 match the 'KMSKS' region motif; the sequence is KFSKS. ATP is bound at residue Lys347. Residues 601–702 enclose the tRNA-binding domain; the sequence is DFLKVDLRVA…GDEINGQQIQ (102 aa).

It belongs to the class-I aminoacyl-tRNA synthetase family. MetG type 1 subfamily. Homodimer. It depends on Zn(2+) as a cofactor.

The protein resides in the cytoplasm. It catalyses the reaction tRNA(Met) + L-methionine + ATP = L-methionyl-tRNA(Met) + AMP + diphosphate. Its function is as follows. Is required not only for elongation of protein synthesis but also for the initiation of all mRNA translation through initiator tRNA(fMet) aminoacylation. The protein is Methionine--tRNA ligase of Chlorobium limicola (strain DSM 245 / NBRC 103803 / 6330).